We begin with the raw amino-acid sequence, 855 residues long: Lon protease (855 aa).

Residues 45–288 (IYLLTVKNVV…ETFRFLNIEY (244 aa)) enclose the Lon N-terminal domain. Position 439–446 (439–446 (GPPGVGKT)) interacts with ATP. In terms of domain architecture, Lon proteolytic spans 674-855 (IQVPGVVTGL…NEVIDLSIIK (182 aa)). Active-site residues include Ser761 and Lys804.

This sequence belongs to the peptidase S16 family. As to quaternary structure, homohexamer. Organized in a ring with a central cavity.

The protein localises to the cytoplasm. It carries out the reaction Hydrolysis of proteins in presence of ATP.. ATP-dependent serine protease that mediates the selective degradation of mutant and abnormal proteins as well as certain short-lived regulatory proteins. Required for cellular homeostasis and for survival from DNA damage and developmental changes induced by stress. Degrades polypeptides processively to yield small peptide fragments that are 5 to 10 amino acids long. Binds to DNA in a double-stranded, site-specific manner. This Karelsulcia muelleri (strain GWSS) (Sulcia muelleri) protein is Lon protease.